Here is a 146-residue protein sequence, read N- to C-terminus: Core protein D2 (146 aa).

This sequence belongs to the orthopoxvirus OPG114 family. As to quaternary structure, part of a complex composed of the kinase OPG054, OPG092, OPG100, OPG114, OPG115, OPG142 and OPG157.

Its subcellular location is the virion. Its function is as follows. Late protein which is part of a large complex required for early virion morphogenesis. This complex participates in the formation of virosomes and the incorporation of virosomal contents into nascent immature virions. In Vaccinia virus (strain Copenhagen) (VACV), this protein is Core protein D2 (OPG114).